An 883-amino-acid chain; its full sequence is DNA topoisomerase 1 (883 aa).

A Toprim domain is found at 2–126 (PKLVIVESPT…TKRMVFHEIT (125 aa)). 2 residues coordinate Mg(2+): Glu-8 and Asp-95. The region spanning 141 to 583 (DQRLVHAQET…QFYRGDRGLE (443 aa)) is the Topo IA-type catalytic domain. The interval 175–180 (SAGRVQ) is interaction with DNA. Residues 271-294 (SLEEKPTTRKPAPPFTTSTLQQES) form a disordered region. Tyr-320 acts as the O-(5'-phospho-DNA)-tyrosine intermediate in catalysis. A disordered region spans residues 842–883 (AKAGQAKAKGGRRSTGTPKSGETKARTTKTTKKTTTRRTTSR). A compositionally biased stretch (basic residues) spans 867 to 883 (RTTKTTKKTTTRRTTSR).

It belongs to the type IA topoisomerase family. Monomer. Requires Mg(2+) as cofactor.

It carries out the reaction ATP-independent breakage of single-stranded DNA, followed by passage and rejoining.. Functionally, releases the supercoiling and torsional tension of DNA, which is introduced during the DNA replication and transcription, by transiently cleaving and rejoining one strand of the DNA duplex. Introduces a single-strand break via transesterification at a target site in duplex DNA. The scissile phosphodiester is attacked by the catalytic tyrosine of the enzyme, resulting in the formation of a DNA-(5'-phosphotyrosyl)-enzyme intermediate and the expulsion of a 3'-OH DNA strand. The free DNA strand then undergoes passage around the unbroken strand, thus removing DNA supercoils. Finally, in the religation step, the DNA 3'-OH attacks the covalent intermediate to expel the active-site tyrosine and restore the DNA phosphodiester backbone. The protein is DNA topoisomerase 1 of Synechococcus elongatus (strain ATCC 33912 / PCC 7942 / FACHB-805) (Anacystis nidulans R2).